The sequence spans 550 residues: Glutamine--tRNA ligase (550 aa).

Positions 34–44 (PEPNGYLHLGH) match the 'HIGH' region motif. Residues 35-37 (EPN) and 41-47 (HLGHAKS) contribute to the ATP site. Residues Asp-67 and Tyr-212 each contribute to the L-glutamine site. ATP contacts are provided by residues Thr-231, 261–262 (RL), and 269–271 (LSK). The 'KMSKS' region signature appears at 268-272 (VLSKR).

This sequence belongs to the class-I aminoacyl-tRNA synthetase family. In terms of assembly, monomer.

It is found in the cytoplasm. The catalysed reaction is tRNA(Gln) + L-glutamine + ATP = L-glutaminyl-tRNA(Gln) + AMP + diphosphate. The protein is Glutamine--tRNA ligase of Buchnera aphidicola subsp. Baizongia pistaciae (strain Bp).